The sequence spans 202 residues: Adenylyl-sulfate kinase (202 aa).

35–42 (GLSGSGKS) contacts ATP. The active-site Phosphoserine intermediate is the Ser-109.

This sequence belongs to the APS kinase family.

The enzyme catalyses adenosine 5'-phosphosulfate + ATP = 3'-phosphoadenylyl sulfate + ADP + H(+). It participates in sulfur metabolism; hydrogen sulfide biosynthesis; sulfite from sulfate: step 2/3. Its function is as follows. Catalyzes the synthesis of activated sulfate. This chain is Adenylyl-sulfate kinase, found in Bacteroides fragilis (strain YCH46).